The primary structure comprises 433 residues: Probable M18 family aminopeptidase 2 (433 aa).

H84, H161, and H409 together coordinate Zn(2+).

The protein belongs to the peptidase M18 family. Zn(2+) serves as cofactor.

In Clostridium novyi (strain NT), this protein is Probable M18 family aminopeptidase 2.